A 465-amino-acid chain; its full sequence is GTPase Der (465 aa).

2 EngA-type G domains span residues 3 to 167 and 179 to 352; these read PLVA…PEEG and IRIA…ESAN. Residues 9–16, 57–61, 119–122, 185–192, 232–236, and 297–300 contribute to the GTP site; these read GRPNVGKS, DTGGI, NKID, DTAGL, and NKWD. One can recognise a KH-like domain in the interval 353–437; that stretch reads KTFTTSEVNK…PVSFIFREGT (85 aa).

Belongs to the TRAFAC class TrmE-Era-EngA-EngB-Septin-like GTPase superfamily. EngA (Der) GTPase family. As to quaternary structure, associates with the 50S ribosomal subunit.

GTPase that plays an essential role in the late steps of ribosome biogenesis. This chain is GTPase Der, found in Stenotrophomonas maltophilia (strain K279a).